The chain runs to 277 residues: MEKLYALFGCPVHHSLSPIMHNDAFQNMNIAAHYHAFHVEPERLKDAIAGVRALGISGVNVTIPHKTAVMPLLDEVDPTARRIGAVNTIVNRNGRLIGYNTDGPGYVRALEEEINVDIKEKRILLIGAGGAARGIYVSLADRGAKQIDICNRTVSKAKQLIDECNASVSSVVYSLNEAEERLGEYDILINTTSVGMYPNMEEMPLSLANMKEETIVSDIIYNPLETKWLKEARKRNGIIQNGVGMFVYQGALAFEKWTGIFPDVQRMKKIVIEQLRG.

Shikimate contacts are provided by residues 15–17 (SLS) and T62. K66 serves as the catalytic Proton acceptor. The shikimate site is built by N87 and D102. NADP(+)-binding positions include 127–131 (GAGGA), 151–156 (NRTVSK), and I219. Y221 contributes to the shikimate binding site. G242 is a binding site for NADP(+).

It belongs to the shikimate dehydrogenase family. In terms of assembly, homodimer.

It catalyses the reaction shikimate + NADP(+) = 3-dehydroshikimate + NADPH + H(+). It functions in the pathway metabolic intermediate biosynthesis; chorismate biosynthesis; chorismate from D-erythrose 4-phosphate and phosphoenolpyruvate: step 4/7. Functionally, involved in the biosynthesis of the chorismate, which leads to the biosynthesis of aromatic amino acids. Catalyzes the reversible NADPH linked reduction of 3-dehydroshikimate (DHSA) to yield shikimate (SA). The sequence is that of Shikimate dehydrogenase (NADP(+)) from Geobacillus sp. (strain WCH70).